Consider the following 251-residue polypeptide: MVEDSQETTHFGFQTVAKEQKADMVAHVFHSVASKYDVMNDLMSFGIHRLWKRFTIDCSGVRRGQTVLDLAGGTGDLTAKFSRLVGETGNVILADINDSMLKMGREKLRNIGVIGNVKYVQANAEALPFPDNTFDCITISFGLRNVTEKEKALRSMYRVLKPGGRLLVLEFSKPIIEPLSKAYDAYSFHILPRIGSVVANDADSYRYLAESIRMHPDQDTLKAMMQDAGFESVDYYNLTAGVVALHRGYKF.

S-adenosyl-L-methionine is bound by residues T74, D95, N123–A124, and S140.

This sequence belongs to the class I-like SAM-binding methyltransferase superfamily. MenG/UbiE family.

It catalyses the reaction a 2-demethylmenaquinol + S-adenosyl-L-methionine = a menaquinol + S-adenosyl-L-homocysteine + H(+). The catalysed reaction is a 2-methoxy-6-(all-trans-polyprenyl)benzene-1,4-diol + S-adenosyl-L-methionine = a 5-methoxy-2-methyl-3-(all-trans-polyprenyl)benzene-1,4-diol + S-adenosyl-L-homocysteine + H(+). Its pathway is quinol/quinone metabolism; menaquinone biosynthesis; menaquinol from 1,4-dihydroxy-2-naphthoate: step 2/2. It functions in the pathway cofactor biosynthesis; ubiquinone biosynthesis. Methyltransferase required for the conversion of demethylmenaquinol (DMKH2) to menaquinol (MKH2) and the conversion of 2-polyprenyl-6-methoxy-1,4-benzoquinol (DDMQH2) to 2-polyprenyl-3-methyl-6-methoxy-1,4-benzoquinol (DMQH2). In Citrobacter koseri (strain ATCC BAA-895 / CDC 4225-83 / SGSC4696), this protein is Ubiquinone/menaquinone biosynthesis C-methyltransferase UbiE.